The sequence spans 520 residues: Nonsense-mediated mRNA decay factor SMG9 (520 aa).

Positions 1–143 (MSESGHSQPG…KGEKEGQRPT (143 aa)) are disordered. Residue Ser-2 is modified to N-acetylserine. A phosphoserine mark is found at Ser-2, Ser-4, Ser-7, Ser-32, and Ser-53. Basic and acidic residues predominate over residues 36-53 (GRERDYIAPWERERRDGS). Pro residues-rich tracts occupy residues 78 to 94 (QPPP…PAPL) and 122 to 133 (TAPPPPTAPAPP). Position 451 is a phosphoserine (Ser-451).

This sequence belongs to the SMG9 family. As to quaternary structure, self-associates to form homodimers and forms heterodimers with SMG8; these assembly forms may represent SMG1C intermediate forms. Component of the SMG1C complex composed of SMG1, SMG8 and SMG9. Interacts with DHX34; the interaction is RNA-independent. In terms of processing, phosphorylated by SMG1.

Involved in nonsense-mediated decay (NMD) of mRNAs containing premature stop codons. Is recruited by release factors to stalled ribosomes together with SMG1 and SMG8 (forming the SMG1C protein kinase complex) and, in the SMG1C complex, is required for the efficient association between SMG1 and SMG8. Plays a role in brain, heart, and eye development. This chain is Nonsense-mediated mRNA decay factor SMG9, found in Mus musculus (Mouse).